A 399-amino-acid polypeptide reads, in one-letter code: Protein TWIN LOV 1 (399 aa).

The region spanning 26–97 (LWIKEALEEL…MEIREAIREE (72 aa)) is the PAS 1 domain. A PAC 1 domain is found at 98-153 (RSVQVSLLNYRKSGSPFWMLFHMCPVFGKDDGKVTNFVAVQVPISGREHHRKKLRN). The 72-residue stretch at 249 to 320 (SLVISLGRIK…EMKECILKGQ (72 aa)) folds into the PAS 2 domain. At Cys296 the chain carries S-4a-FMN cysteine. The 57-residue stretch at 320-376 (QSCTVQILNYSNRKDKSSFWNLLHISPVRNASGKTAYFVGVQVEASCRNTEIKELRP) folds into the PAC 2 domain.

As to quaternary structure, interacts with VTC2, VTC5 and BLH10. Post-translationally, FMN binds covalently to cysteine after exposure to blue light and is reversed in the dark.

The chain is Protein TWIN LOV 1 (TLP1) from Arabidopsis thaliana (Mouse-ear cress).